We begin with the raw amino-acid sequence, 356 residues long: Histidinol-phosphate aminotransferase (356 aa).

At Lys217 the chain carries N6-(pyridoxal phosphate)lysine.

Belongs to the class-II pyridoxal-phosphate-dependent aminotransferase family. Histidinol-phosphate aminotransferase subfamily. Homodimer. Pyridoxal 5'-phosphate is required as a cofactor.

The enzyme catalyses L-histidinol phosphate + 2-oxoglutarate = 3-(imidazol-4-yl)-2-oxopropyl phosphate + L-glutamate. Its pathway is amino-acid biosynthesis; L-histidine biosynthesis; L-histidine from 5-phospho-alpha-D-ribose 1-diphosphate: step 7/9. This is Histidinol-phosphate aminotransferase from Chromobacterium violaceum (strain ATCC 12472 / DSM 30191 / JCM 1249 / CCUG 213 / NBRC 12614 / NCIMB 9131 / NCTC 9757 / MK).